The chain runs to 153 residues: Natriuretic peptides A (153 aa).

An N-terminal signal peptide occupies residues 1 to 25 (MGSFSTITASFLLFLACQLLWQTGA). 2 propeptides span residues 26–123 (NPVY…AAPR) and 93–103 (DGGALGRGSWD). The interval 62–104 (VLSEQNEEAGAALSPLPEVPPWAGEVNPAQRDGGALGRGSWDS) is disordered. At Ser129 the chain carries Phosphoserine. A disulfide bridge connects residues Cys130 and Cys146. The tract at residues 147 to 151 (NSFRY) is important for degradation of atrial natriuretic peptide by IDE.

It belongs to the natriuretic peptide family. As to quaternary structure, homodimer; disulfide-linked antiparallel dimer. The precursor molecule is proteolytically cleaved by CORIN at Arg-123 to produce the atrial natriuretic peptide. Undergoes further proteolytic cleavage by unknown proteases to give rise to long-acting natriuretic peptide, vessel dilator and kaliuretic peptide. Additional processing gives rise to the auriculin and atriopeptin peptides. In the kidneys, alternative processing by an unknown protease results in the peptide urodilatin. In terms of processing, cleavage by MME initiates degradation of the factor and thereby regulates its activity. Degradation by IDE results in reduced activation of NPR1 (in vitro). During IDE degradation, the resulting products can temporarily stimulate NPR2 to produce cGMP, before the fragments are completely degraded and inactivated by IDE (in vitro). Post-translationally, degraded by IDE. Phosphorylation on Ser-129 decreases vasorelaxant activity.

It is found in the secreted. The protein localises to the perikaryon. The protein resides in the cell projection. Hormone that plays a key role in mediating cardio-renal homeostasis, and is involved in vascular remodeling and regulating energy metabolism. Acts by specifically binding and stimulating NPR1 to produce cGMP, which in turn activates effector proteins, such as PRKG1, that drive various biological responses. Regulates vasodilation, natriuresis, diuresis and aldosterone synthesis and is therefore essential for regulating blood pressure, controlling the extracellular fluid volume and maintaining the fluid-electrolyte balance. Also involved in inhibiting cardiac remodeling and cardiac hypertrophy by inducing cardiomyocyte apoptosis and attenuating the growth of cardiomyocytes and fibroblasts. Plays a role in female pregnancy by promoting trophoblast invasion and spiral artery remodeling in uterus, and thus prevents pregnancy-induced hypertension. In adipose tissue, acts in various cGMP- and PKG-dependent pathways to regulate lipid metabolism and energy homeostasis. This includes up-regulating lipid metabolism and mitochondrial oxygen utilization by activating the AMP-activated protein kinase (AMPK), and increasing energy expenditure by acting via MAPK11 to promote the UCP1-dependent thermogenesis of brown adipose tissue. Binds the clearance receptor NPR3 which removes the hormone from circulation. In terms of biological role, may have a role in cardio-renal homeostasis through regulation of natriuresis, diuresis, vasodilation, and inhibiting aldosterone synthesis. In vitro, promotes the production of cGMP and induces vasodilation. May promote natriuresis, at least in part, by enhancing prostaglandin E2 synthesis resulting in the inhibition of renal Na+-K+-ATPase. However reports on the involvement of this peptide in mammal blood volume and blood pressure homeostasis are conflicting; according to a report, in vivo it is not sufficient to activate cGMP and does not inhibit collecting duct transport nor effect diuresis and natriuresis. Appears to bind to specific receptors that are distinct from the receptors bound by atrial natriuretic peptide and vessel dilator. Possibly enhances protein excretion in urine by decreasing proximal tubular protein reabsorption. Functionally, may have a role in cardio-renal homeostasis through regulation of natriuresis, diuresis, and vasodilation. In vitro, promotes the production of cGMP and induces vasodilation. May promote natriuresis, at least in part, by enhancing prostaglandin E2 synthesis resulting in the inhibition of renal Na+-K+-ATPase. However reports on the involvement of this peptide in mammal blood volume and blood pressure homeostasis are conflicting; according to a report it is not sufficient to activate cGMP and does not inhibit collecting duct transport nor effect diuresis and natriuresis. Appears to bind to specific receptors that are distinct from the receptors bound by the atrial natriuretic and long-acting natriuretic peptides. Possibly functions in protein excretion in urine by maintaining the integrity of the proximal tubules and enhancing protein excretion by decreasing proximal tubular protein reabsorption. Its function is as follows. May have a role in cardio-renal homeostasis through regulation of diuresis and inhibiting aldosterone synthesis. In vitro, promotes the production of cGMP and induces vasodilation. May promote natriuresis, at least in part, by enhancing prostaglandin E2 synthesis resulting in the inhibition of renal Na+-K+-ATPase. May have a role in potassium excretion but not sodium excretion (natriuresis). Possibly enhances protein excretion in urine by decreasing proximal tubular protein reabsorption. Hormone produced in the kidneys that appears to be important for maintaining cardio-renal homeostasis. Mediates vasodilation, natriuresis and diuresis primarily in the renal system, in order to maintain the extracellular fluid volume and control the fluid-electrolyte balance. Specifically binds and stimulates cGMP production by renal transmembrane receptors, likely NPR1. Urodilatin not ANP, may be the natriuretic peptide responsible for the regulation of sodium and water homeostasis in the kidney. In terms of biological role, may have a role in cardio-renal homeostasis through regulation of natriuresis and vasodilation. In vivo promotes natriuresis and in vitro, vasodilates renal artery strips. Functionally, may have a role in cardio-renal homeostasis through regulation of regulation of natriuresis and vasodilation. In vivo promotes natriuresis. In vitro, vasodilates intestinal smooth muscle but not smooth muscle strips. Its function is as follows. May have a role in cardio-renal homeostasis through regulation of natriuresis and vasodilation. In vivo promotes natriuresis. In vitro, selectively vasodilates intestinal and vascular smooth muscle strips. May have a role in cardio-renal homeostasis through regulation of natriuresis and vasodilation. In vivo promotes natriuresis. In vitro, selectively vasodilates intestinal smooth muscle but not vascular smooth muscle strips. The sequence is that of Natriuretic peptides A (NPPA) from Felis catus (Cat).